The primary structure comprises 529 residues: Beta-galactoside alpha-2,6-sialyltransferase 2 (529 aa).

The Cytoplasmic segment spans residues 1–11 (MKPHLKQWRQR). Residues 12–32 (MLFGIFAWGLLFLLIFIYFTD) form a helical; Signal-anchor for type II membrane protein membrane-spanning segment. The Lumenal portion of the chain corresponds to 33 to 529 (SNPAEPVPSS…PAPSPVIPHS (497 aa)). O-linked (GalNAc...) serine glycosylation is present at Ser69. Asn211 carries an N-linked (GlcNAc...) asparagine glycan. 3 disulfides stabilise this stretch: Cys253–Cys519, Cys296–Cys448, and Cys466–Cys477.

This sequence belongs to the glycosyltransferase 29 family. O-glycosylated. In terms of tissue distribution, weakly expressed in some tissues, such as small intestine, colon and fetal brain.

The protein resides in the golgi apparatus. It localises to the golgi stack membrane. The catalysed reaction is a beta-D-galactoside + CMP-N-acetyl-beta-neuraminate = an N-acetyl-alpha-neuraminyl-(2-&gt;6)-beta-D-galactosyl derivative + CMP + H(+). Transfers sialic acid from the donor of substrate CMP-sialic acid to galactose containing acceptor substrates. Has alpha-2,6-sialyltransferase activity toward oligosaccharides that have the Gal-beta-1,4-GlcNAc sequence at the non-reducing end of their carbohydrate groups, but it has weak or no activities toward glycoproteins and glycolipids. In Homo sapiens (Human), this protein is Beta-galactoside alpha-2,6-sialyltransferase 2 (ST6GAL2).